Reading from the N-terminus, the 596-residue chain is Transketolase-like protein 1 (596 aa).

A substrate-binding site is contributed by His-46. Residues Ser-49 and 94 to 96 (GWL) contribute to the thiamine diphosphate site. Residue Asp-126 participates in Mg(2+) binding. Thiamine diphosphate is bound by residues Gly-127 and Asn-156. Residues Asn-156 and Leu-158 each contribute to the Mg(2+) site. 2 residues coordinate thiamine diphosphate: Lys-218 and His-232. Substrate-binding residues include His-232, Arg-292, and Ser-319. Thiamine diphosphate contacts are provided by Glu-340 and Phe-366. Glu-340 functions as the Proton donor in the catalytic mechanism. The substrate site is built by His-390 and Asp-398. Residue Gln-402 participates in thiamine diphosphate binding. Arg-448 serves as a coordination point for substrate.

Belongs to the transketolase family. Homodimer. It depends on Mg(2+) as a cofactor. Requires Ca(2+) as cofactor. Mn(2+) serves as cofactor. The cofactor is Co(2+). Thiamine diphosphate is required as a cofactor. In terms of tissue distribution, widely expressed. Expressed in endothelial cells and in peripheral neurons (at protein level). As to expression, not expressed in fetal neocortex. Expressed in fetal neocortex.

It localises to the cytoplasm. It catalyses the reaction D-sedoheptulose 7-phosphate + D-glyceraldehyde 3-phosphate = aldehydo-D-ribose 5-phosphate + D-xylulose 5-phosphate. In terms of biological role, catalyzes the transfer of a two-carbon ketol group from a ketose donor to an aldose acceptor, via a covalent intermediate with the cofactor thiamine pyrophosphate. Functionally, during fetal neocortex development, may be essential to maintain the full number of basal radial glia (bRG). bRG are neural progenitor cells that undergo asymmetric divisions, generating a bRG (self-renewal) and a neuron, in contrast to basal intermediate progenitors (bIPs), which typically divide once to give rise to 2 neurons. bRG generate more cortical neurons over time than bIPs. This is Transketolase-like protein 1 (TKTL1) from Homo sapiens (Human).